Here is a 142-residue protein sequence, read N- to C-terminus: Large ribosomal subunit protein uL13 (142 aa).

This sequence belongs to the universal ribosomal protein uL13 family. Part of the 50S ribosomal subunit.

In terms of biological role, this protein is one of the early assembly proteins of the 50S ribosomal subunit, although it is not seen to bind rRNA by itself. It is important during the early stages of 50S assembly. This chain is Large ribosomal subunit protein uL13, found in Hydrogenovibrio crunogenus (strain DSM 25203 / XCL-2) (Thiomicrospira crunogena).